The following is a 225-amino-acid chain: Cytidylate kinase (225 aa).

An ATP-binding site is contributed by 11–19; that stretch reads GPAAAGKST.

It belongs to the cytidylate kinase family. Type 1 subfamily.

Its subcellular location is the cytoplasm. It catalyses the reaction CMP + ATP = CDP + ADP. The enzyme catalyses dCMP + ATP = dCDP + ADP. In Bacillus anthracis (strain A0248), this protein is Cytidylate kinase.